We begin with the raw amino-acid sequence, 208 residues long: Hypoxanthine-guanine phosphoribosyltransferase (208 aa).

Residues K63, E122 to T130, K154, and D182 contribute to the GMP site. Residue D126 is the Proton acceptor of the active site. D182 serves as a coordination point for Mg(2+).

This sequence belongs to the purine/pyrimidine phosphoribosyltransferase family. Mg(2+) is required as a cofactor.

It localises to the cytoplasm. The enzyme catalyses IMP + diphosphate = hypoxanthine + 5-phospho-alpha-D-ribose 1-diphosphate. It carries out the reaction GMP + diphosphate = guanine + 5-phospho-alpha-D-ribose 1-diphosphate. Its pathway is purine metabolism; IMP biosynthesis via salvage pathway; IMP from hypoxanthine: step 1/1. In terms of biological role, converts guanine to guanosine monophosphate, and hypoxanthine to inosine monophosphate. Transfers the 5-phosphoribosyl group from 5-phosphoribosylpyrophosphate onto the purine. Plays a central role in the generation of purine nucleotides through the purine salvage pathway. This chain is Hypoxanthine-guanine phosphoribosyltransferase (HGPRT), found in Crithidia fasciculata.